A 108-amino-acid polypeptide reads, in one-letter code: Ribonuclease P protein component (108 aa).

It belongs to the RnpA family. Consists of a catalytic RNA component (M1 or rnpB) and a protein subunit.

The catalysed reaction is Endonucleolytic cleavage of RNA, removing 5'-extranucleotides from tRNA precursor.. Its function is as follows. RNaseP catalyzes the removal of the 5'-leader sequence from pre-tRNA to produce the mature 5'-terminus. It can also cleave other RNA substrates such as 4.5S RNA. The protein component plays an auxiliary but essential role in vivo by binding to the 5'-leader sequence and broadening the substrate specificity of the ribozyme. In Campylobacter jejuni subsp. doylei (strain ATCC BAA-1458 / RM4099 / 269.97), this protein is Ribonuclease P protein component.